A 329-amino-acid chain; its full sequence is DNA-directed RNA polymerase subunit alpha (329 aa).

Positions 1 to 235 (MQGSVTEFLK…EQLEAFVDLR (235 aa)) are alpha N-terminal domain (alpha-NTD). Residues 249–329 (FDPILLRPVD…NWPPASIADE (81 aa)) form an alpha C-terminal domain (alpha-CTD) region.

It belongs to the RNA polymerase alpha chain family. Homodimer. The RNAP catalytic core consists of 2 alpha, 1 beta, 1 beta' and 1 omega subunit. When a sigma factor is associated with the core the holoenzyme is formed, which can initiate transcription.

It catalyses the reaction RNA(n) + a ribonucleoside 5'-triphosphate = RNA(n+1) + diphosphate. Functionally, DNA-dependent RNA polymerase catalyzes the transcription of DNA into RNA using the four ribonucleoside triphosphates as substrates. The sequence is that of DNA-directed RNA polymerase subunit alpha from Yersinia pestis bv. Antiqua (strain Antiqua).